Consider the following 369-residue polypeptide: Glutamate 5-kinase (369 aa).

Residue Lys8 participates in ATP binding. Positions 49, 136, and 148 each coordinate substrate. Residues 168–169 (TD) and 211–217 (TGGMATK) contribute to the ATP site. In terms of domain architecture, PUA spans 276–354 (TGKLYLDSGA…DEISQILGYG (79 aa)).

The protein belongs to the glutamate 5-kinase family.

The protein resides in the cytoplasm. It catalyses the reaction L-glutamate + ATP = L-glutamyl 5-phosphate + ADP. It functions in the pathway amino-acid biosynthesis; L-proline biosynthesis; L-glutamate 5-semialdehyde from L-glutamate: step 1/2. Its function is as follows. Catalyzes the transfer of a phosphate group to glutamate to form L-glutamate 5-phosphate. The sequence is that of Glutamate 5-kinase from Rippkaea orientalis (strain PCC 8801 / RF-1) (Cyanothece sp. (strain PCC 8801)).